Here is a 280-residue protein sequence, read N- to C-terminus: MFFRAYAKINISLDVVGKREDDYHLLEMIMQRIELYDILEVTKNKTGINIKCNKSYVPLDERNLVYKAAKLFLDTYNLKGGVDFNIIKNIPVSAGLAGGSSDAATTLLAMRELYNIDVSDDELCKLGLKIGADVPYCIKGGTALCEGIGEKVTNLKGFKGHILVLVKPKFGVSTKEVYKSLDINKIYRHPNTEGLIKAVENNDLRYVSENMRNVLENVTLKKHTIIKEIKEKMIRSGALGSMMSGSGPSVFGFFDDMLKAQRCYEYFKSKYNDVYITRTI.

The active site involves K8. Position 91–101 (91–101 (PVSAGLAGGSS)) interacts with ATP. D133 is an active-site residue.

It belongs to the GHMP kinase family. IspE subfamily.

The enzyme catalyses 4-CDP-2-C-methyl-D-erythritol + ATP = 4-CDP-2-C-methyl-D-erythritol 2-phosphate + ADP + H(+). It functions in the pathway isoprenoid biosynthesis; isopentenyl diphosphate biosynthesis via DXP pathway; isopentenyl diphosphate from 1-deoxy-D-xylulose 5-phosphate: step 3/6. Functionally, catalyzes the phosphorylation of the position 2 hydroxy group of 4-diphosphocytidyl-2C-methyl-D-erythritol. The protein is 4-diphosphocytidyl-2-C-methyl-D-erythritol kinase of Clostridium novyi (strain NT).